The primary structure comprises 363 residues: Protein Wnt-5b (363 aa).

The first 21 residues, 1–21, serve as a signal peptide directing secretion; sequence MDVRMNQGHLLLAVTLIVCNS. An intrachain disulfide couples cysteine 87 to cysteine 98. 2 N-linked (GlcNAc...) asparagine glycosylation sites follow: asparagine 97 and asparagine 103. 10 disulfides stabilise this stretch: cysteine 137/cysteine 145, cysteine 147/cysteine 165, cysteine 221/cysteine 235, cysteine 223/cysteine 230, cysteine 292/cysteine 323, cysteine 308/cysteine 318, cysteine 322/cysteine 362, cysteine 338/cysteine 353, cysteine 340/cysteine 350, and cysteine 345/cysteine 346. Serine 227 is lipidated: O-palmitoleoyl serine; by PORCN. Residues asparagine 295 and asparagine 309 are each glycosylated (N-linked (GlcNAc...) asparagine).

This sequence belongs to the Wnt family. Palmitoleoylation is required for efficient binding to frizzled receptors. Depalmitoleoylation leads to Wnt signaling pathway inhibition.

The protein localises to the secreted. Its subcellular location is the extracellular space. It is found in the extracellular matrix. Its function is as follows. Ligand for members of the frizzled family of seven transmembrane receptors. Can activate or inhibit canonical Wnt signaling, depending on receptor context. Required during embryogenesis for extension of the primary anterior-posterior axis. Regulates convergent extension movements and hypaxial myogenesis during gastrulation via activation of non-canonical Wnt signaling. This Danio rerio (Zebrafish) protein is Protein Wnt-5b (wnt5b).